The chain runs to 181 residues: Oligoribonuclease (181 aa).

The Exonuclease domain occupies 8–171; that stretch reads LIWIDLEMTG…QDIQESIAEL (164 aa). Y129 is an active-site residue.

The protein belongs to the oligoribonuclease family.

It is found in the cytoplasm. In terms of biological role, 3'-to-5' exoribonuclease specific for small oligoribonucleotides. The polypeptide is Oligoribonuclease (Shewanella oneidensis (strain ATCC 700550 / JCM 31522 / CIP 106686 / LMG 19005 / NCIMB 14063 / MR-1)).